Consider the following 336-residue polypeptide: tRNA N6-adenosine threonylcarbamoyltransferase (336 aa).

Residues His-112 and His-116 each coordinate Fe cation. Substrate contacts are provided by residues 136-140 (LVSGG), Asp-169, Gly-182, and Asn-276. Asp-304 is a Fe cation binding site.

The protein belongs to the KAE1 / TsaD family. It depends on Fe(2+) as a cofactor.

The protein resides in the cytoplasm. The catalysed reaction is L-threonylcarbamoyladenylate + adenosine(37) in tRNA = N(6)-L-threonylcarbamoyladenosine(37) in tRNA + AMP + H(+). In terms of biological role, required for the formation of a threonylcarbamoyl group on adenosine at position 37 (t(6)A37) in tRNAs that read codons beginning with adenine. Is involved in the transfer of the threonylcarbamoyl moiety of threonylcarbamoyl-AMP (TC-AMP) to the N6 group of A37, together with TsaE and TsaB. TsaD likely plays a direct catalytic role in this reaction. This is tRNA N6-adenosine threonylcarbamoyltransferase from Francisella tularensis subsp. holarctica (strain LVS).